A 357-amino-acid chain; its full sequence is UDP-N-acetylglucosamine--N-acetylmuramyl-(pentapeptide) pyrophosphoryl-undecaprenol N-acetylglucosamine transferase (357 aa).

UDP-N-acetyl-alpha-D-glucosamine contacts are provided by residues 13–15 (TGG), Asn-125, Arg-161, Ser-189, Ile-243, and Gln-288.

Belongs to the glycosyltransferase 28 family. MurG subfamily.

It is found in the cell inner membrane. It carries out the reaction di-trans,octa-cis-undecaprenyl diphospho-N-acetyl-alpha-D-muramoyl-L-alanyl-D-glutamyl-meso-2,6-diaminopimeloyl-D-alanyl-D-alanine + UDP-N-acetyl-alpha-D-glucosamine = di-trans,octa-cis-undecaprenyl diphospho-[N-acetyl-alpha-D-glucosaminyl-(1-&gt;4)]-N-acetyl-alpha-D-muramoyl-L-alanyl-D-glutamyl-meso-2,6-diaminopimeloyl-D-alanyl-D-alanine + UDP + H(+). The protein operates within cell wall biogenesis; peptidoglycan biosynthesis. In terms of biological role, cell wall formation. Catalyzes the transfer of a GlcNAc subunit on undecaprenyl-pyrophosphoryl-MurNAc-pentapeptide (lipid intermediate I) to form undecaprenyl-pyrophosphoryl-MurNAc-(pentapeptide)GlcNAc (lipid intermediate II). The sequence is that of UDP-N-acetylglucosamine--N-acetylmuramyl-(pentapeptide) pyrophosphoryl-undecaprenol N-acetylglucosamine transferase from Bordetella pertussis (strain Tohama I / ATCC BAA-589 / NCTC 13251).